The sequence spans 107 residues: Nucleoid-associated protein PHZ_c0369 (107 aa).

This sequence belongs to the YbaB/EbfC family. Homodimer.

The protein resides in the cytoplasm. It is found in the nucleoid. Functionally, binds to DNA and alters its conformation. May be involved in regulation of gene expression, nucleoid organization and DNA protection. The chain is Nucleoid-associated protein PHZ_c0369 from Phenylobacterium zucineum (strain HLK1).